An 888-amino-acid chain; its full sequence is Leucine--tRNA ligase (888 aa).

The 'HIGH' region motif lies at 43 to 53; it reads PYPSGRIHMGH. The 'KMSKS' region motif lies at 644–648; sequence KMSKS. K647 is an ATP binding site.

This sequence belongs to the class-I aminoacyl-tRNA synthetase family.

It localises to the cytoplasm. The catalysed reaction is tRNA(Leu) + L-leucine + ATP = L-leucyl-tRNA(Leu) + AMP + diphosphate. In Rhodopseudomonas palustris (strain BisA53), this protein is Leucine--tRNA ligase.